A 422-amino-acid chain; its full sequence is Enolase (422 aa).

Gln161 is a (2R)-2-phosphoglycerate binding site. Residue Glu203 is the Proton donor of the active site. Asp240, Glu283, and Asp310 together coordinate Mg(2+). 4 residues coordinate (2R)-2-phosphoglycerate: Lys335, Arg364, Ser365, and Lys386. Lys335 functions as the Proton acceptor in the catalytic mechanism.

The protein belongs to the enolase family. Mg(2+) is required as a cofactor.

The protein localises to the cytoplasm. It is found in the secreted. Its subcellular location is the cell surface. The enzyme catalyses (2R)-2-phosphoglycerate = phosphoenolpyruvate + H2O. It participates in carbohydrate degradation; glycolysis; pyruvate from D-glyceraldehyde 3-phosphate: step 4/5. Functionally, catalyzes the reversible conversion of 2-phosphoglycerate (2-PG) into phosphoenolpyruvate (PEP). It is essential for the degradation of carbohydrates via glycolysis. In Deinococcus deserti (strain DSM 17065 / CIP 109153 / LMG 22923 / VCD115), this protein is Enolase.